The chain runs to 501 residues: Cytochrome P450 71D6 (501 aa).

Cysteine 442 provides a ligand contact to heme.

This sequence belongs to the cytochrome P450 family. The cofactor is heme.

In Solanum chacoense (Chaco potato), this protein is Cytochrome P450 71D6 (CYP71D6).